Reading from the N-terminus, the 306-residue chain is tRNA dimethylallyltransferase (306 aa).

6–13 contacts ATP; it reads GPTASGKS. Residue 8–13 coordinates substrate; sequence TASGKS.

It belongs to the IPP transferase family. As to quaternary structure, monomer. It depends on Mg(2+) as a cofactor.

It catalyses the reaction adenosine(37) in tRNA + dimethylallyl diphosphate = N(6)-dimethylallyladenosine(37) in tRNA + diphosphate. In terms of biological role, catalyzes the transfer of a dimethylallyl group onto the adenine at position 37 in tRNAs that read codons beginning with uridine, leading to the formation of N6-(dimethylallyl)adenosine (i(6)A). This is tRNA dimethylallyltransferase from Sphingopyxis alaskensis (strain DSM 13593 / LMG 18877 / RB2256) (Sphingomonas alaskensis).